Reading from the N-terminus, the 110-residue chain is Endoribonuclease SymE (110 aa).

Residues Ser-29 to Pro-74 form the SpoVT-AbrB domain.

It belongs to the SymE family.

The protein resides in the cytoplasm. Functionally, involved in the degradation and recycling of damaged RNA. It is itself a target for degradation by the ATP-dependent protease Lon. This is Endoribonuclease SymE from Salmonella typhi.